The following is a 131-amino-acid chain: Large ribosomal subunit protein bL19 (131 aa).

It belongs to the bacterial ribosomal protein bL19 family.

Its function is as follows. This protein is located at the 30S-50S ribosomal subunit interface and may play a role in the structure and function of the aminoacyl-tRNA binding site. The sequence is that of Large ribosomal subunit protein bL19 from Synechococcus sp. (strain CC9902).